We begin with the raw amino-acid sequence, 520 residues long: Protein EARLY FLOWERING 5 (520 aa).

3 short sequence motifs (nuclear localization signal) span residues 16–23 (YRKQIRKR), 52–59 (IRKLDMSK), and 71–78 (KKRQLEDT). Residues 83 to 410 (VKKRKEYDEK…PPSSFQDGQA (328 aa)) form a disordered region. Basic and acidic residues-rich tracts occupy residues 87–97 (KEYDEKKKEQG) and 114–126 (LTGE…EDSV). Residues 148 to 168 (SSIGLAISSDGASSSSAALSS) are compositionally biased toward low complexity. Pro residues-rich tracts occupy residues 198–207 (PLPPLPPLPP), 216–227 (SPFPPPPPGPPP), and 235–253 (PPLP…PPPG). Polar residues-rich tracts occupy residues 267-281 (SDFT…NITS), 300-312 (AESN…NANL), and 326-343 (QQHQ…TNFQ). 2 stretches are compositionally biased toward pro residues: residues 346 to 369 (VHPP…PPHP) and 378 to 403 (PRPP…PPPS).

In terms of tissue distribution, in seedlings, mostly expressed in the shoot apical meristem (SAM) and root tip.

Its subcellular location is the nucleus. Its function is as follows. Involved in the regulation of flowering time in both long and short days. This is Protein EARLY FLOWERING 5 from Arabidopsis thaliana (Mouse-ear cress).